The sequence spans 149 residues: Transcriptional regulator MraZ (149 aa).

SpoVT-AbrB domains lie at 7 to 54 (KYVN…GISH) and 83 to 126 (AVQL…QPQN).

Belongs to the MraZ family. As to quaternary structure, forms oligomers.

The protein resides in the cytoplasm. The protein localises to the nucleoid. The polypeptide is Transcriptional regulator MraZ (Rickettsia rickettsii (strain Sheila Smith)).